The sequence spans 749 residues: Fibronectin type III and SPRY domain-containing protein 2 (749 aa).

Positions 205-317 (LNEALESAKD…TIEEMCHEEK (113 aa)) form a coiled coil. 2 Fibronectin type-III domains span residues 375–470 (PVIN…TAPS) and 471–564 (PPII…TIGS). The 199-residue stretch at 546 to 744 (NMGGPSVRSE…KVHNGISMPK (199 aa)) folds into the B30.2/SPRY domain.

Interacts with CMYA5. In cardiac muscles, identified in a complex composed of FSD2, CMYA5 and RYR2.

The protein localises to the nucleus. The protein resides in the sarcoplasmic reticulum. It localises to the cytoplasm. Its subcellular location is the perinuclear region. This Homo sapiens (Human) protein is Fibronectin type III and SPRY domain-containing protein 2 (FSD2).